The sequence spans 192 residues: Immunoglobulin superfamily member 23 (192 aa).

The segment at 1–26 (MRAKPQSPLPRNPVPAWSPPTTTTDP) is disordered. A compositionally biased stretch (pro residues) spans 7 to 18 (SPLPRNPVPAWS). An Ig-like domain is found at 20–128 (PTTTTDPMLE…QLVSEPVTIS (109 aa)). N64 is a glycosylation site (N-linked (GlcNAc...) asparagine). The chain crosses the membrane as a helical span at residues 158-178 (LLAAGILGAGALIAGMCFIII).

Expressed in bone and small intestine. Highly expressed in osteoclasts, and low expressed in osteoblasts and peripheral blood mononuclear cells (PBMCs).

Its subcellular location is the cell membrane. Its function is as follows. May be involved in osteoclast differentiation. The chain is Immunoglobulin superfamily member 23 from Homo sapiens (Human).